The primary structure comprises 225 residues: Plasma membrane-associated cation-binding protein 1 (225 aa).

Gly-2 carries the N-myristoyl glycine lipid modification. Residue Thr-32 is modified to Phosphothreonine. Ser-107 carries the phosphoserine modification. The span at 140-197 (PVEEVKAEEPAKTEEPAKTEGTSGEKEEIVEETKKGETPETAVVEEKKPEVEEKKEEA) shows a compositional bias: basic and acidic residues. A disordered region spans residues 140-225 (PVEEVKAEEP…TAPVAEPPKP (86 aa)). Phosphothreonine occurs at positions 152 and 177.

It belongs to the DREPP family. In terms of assembly, interacts with Turnip mosaic virus (TuMV) P3N-PIPO. The cofactor is Cu(2+). Mostly expressed in the basal region of hypocotyls. Expressed in seedlings, roots, shoots, stems, leaves (e.g. in epidermis and vascular tissues), flowers (e.g. in pistils and anthers) and siliques (at protein level).

Its subcellular location is the cell membrane. The protein localises to the cytoplasm. It is found in the cytoskeleton. The protein resides in the cell junction. It localises to the plasmodesma. In terms of biological role, may be involved in intracellular signaling through interaction with PtdInsPs and calmodulin (CaM); may keep PtdInsPs attached to the plasma membrane until Ca(2+)-CaM reaches a competitive concentration subsequent to an increase triggered by a stimulus, thus leading to PtdInsPs release and subsequent activation of InsPs-dependent signaling cascade. Interacts competitively at the N-terminus with calcium ions and CaM (in a calcium-dependent manner), and with the phosphatidylinositol phosphates PtdIns(3,4,5)P(3), PtdIns(3,4)P(2), PtdIns(4,5)P(2) and PtdIns(3,5)P(2). Also binds weakly to PtdIns(3)P, PtdIns(4)P and PtdIns(5)P. Negative regulator of hypocotyl cell elongation by destabilizing cortical microtubules in a calcium-dependent manner. Binds directly to and destabilized microtubules to enhance microtubule depolymerization when cytoplasmic calcium increases. In case of Turnip mosaic virus (TuMV) infection, confers sensitivity by promoting viral cell-to-cell movement through interaction with viral P3N-PIPO. The protein is Plasma membrane-associated cation-binding protein 1 (PCAP1) of Arabidopsis thaliana (Mouse-ear cress).